The primary structure comprises 2278 residues: Protein Ycf2 (2278 aa).

It belongs to the Ycf2 family.

It localises to the plastid. Its subcellular location is the chloroplast stroma. The protein localises to the chromoplast stroma. Functionally, probable ATPase of unknown function. Its presence in a non-photosynthetic plant (Epifagus virginiana) and experiments in tobacco indicate that it has an essential function which is probably not related to photosynthesis. This Solanum lycopersicum (Tomato) protein is Protein Ycf2 (ycf2-A).